A 708-amino-acid polypeptide reads, in one-letter code: Serine/threonine-protein kinase Nek5 (708 aa).

One can recognise a Protein kinase domain in the interval 4 to 259 (YDVIKAIGQG…INSILKRPFL (256 aa)). Residues 10–18 (IGQGAFGKA) and Lys-33 contribute to the ATP site. Asp-128 (proton acceptor) is an active-site residue. Disordered stretches follow at residues 376-403 (SYHP…PSQW) and 423-454 (KQLG…FQEL). Over residues 440–454 (QELRSNGEEPRFQEL) the composition is skewed to basic and acidic residues.

This sequence belongs to the protein kinase superfamily. NEK Ser/Thr protein kinase family. NIMA subfamily. Requires Mg(2+) as cofactor.

The protein resides in the cell projection. It localises to the cilium. Its subcellular location is the flagellum. The catalysed reaction is L-seryl-[protein] + ATP = O-phospho-L-seryl-[protein] + ADP + H(+). The enzyme catalyses L-threonyl-[protein] + ATP = O-phospho-L-threonyl-[protein] + ADP + H(+). This Homo sapiens (Human) protein is Serine/threonine-protein kinase Nek5 (NEK5).